The chain runs to 340 residues: uncharacterized protein (340 aa).

Positions 1–20 are cleaved as a signal peptide; sequence MGGARRLKLDGSIPNQLARA.

This is an uncharacterized protein from Mycobacterium tuberculosis (strain CDC 1551 / Oshkosh).